Here is a 172-residue protein sequence, read N- to C-terminus: Adenine phosphoribosyltransferase (172 aa).

Belongs to the purine/pyrimidine phosphoribosyltransferase family. As to quaternary structure, homodimer.

The protein localises to the cytoplasm. The enzyme catalyses AMP + diphosphate = 5-phospho-alpha-D-ribose 1-diphosphate + adenine. The protein operates within purine metabolism; AMP biosynthesis via salvage pathway; AMP from adenine: step 1/1. Functionally, catalyzes a salvage reaction resulting in the formation of AMP, that is energically less costly than de novo synthesis. This chain is Adenine phosphoribosyltransferase, found in Streptococcus equi subsp. zooepidemicus (strain H70).